A 424-amino-acid chain; its full sequence is Gamma-glutamyl phosphate reductase (424 aa).

It belongs to the gamma-glutamyl phosphate reductase family.

The protein localises to the cytoplasm. The enzyme catalyses L-glutamate 5-semialdehyde + phosphate + NADP(+) = L-glutamyl 5-phosphate + NADPH + H(+). It functions in the pathway amino-acid biosynthesis; L-proline biosynthesis; L-glutamate 5-semialdehyde from L-glutamate: step 2/2. Its function is as follows. Catalyzes the NADPH-dependent reduction of L-glutamate 5-phosphate into L-glutamate 5-semialdehyde and phosphate. The product spontaneously undergoes cyclization to form 1-pyrroline-5-carboxylate. The protein is Gamma-glutamyl phosphate reductase of Dehalococcoides mccartyi (strain ATCC BAA-2100 / JCM 16839 / KCTC 5957 / BAV1).